Reading from the N-terminus, the 64-residue chain is Micrurotoxin 2 (64 aa).

5 cysteine pairs are disulfide-bonded: Cys3–Cys24, Cys6–Cys11, Cys17–Cys41, Cys45–Cys57, and Cys58–Cys63.

This sequence belongs to the three-finger toxin family. Ancestral subfamily. As to expression, expressed by the venom gland.

Its subcellular location is the secreted. Allosteric modulator of the GABA(A) receptor (GABR), possibly increasing receptor affinity for the agonist, thus enhancing receptor opening and macroscopic desensitization. In vivo, intracerebroventricular injection into mice results in periods of reduced basal activity, followed by bursts of intense seizures and death. The polypeptide is Micrurotoxin 2 (Micrurus mipartitus (Red-tailed coral snake)).